Consider the following 197-residue polypeptide: Xanthine phosphoribosyltransferase (197 aa).

Xanthine-binding residues include L20 and T27. 128–132 lines the 5-phospho-alpha-D-ribose 1-diphosphate pocket; the sequence is ANGQA. K156 is a binding site for xanthine.

It belongs to the purine/pyrimidine phosphoribosyltransferase family. Xpt subfamily. As to quaternary structure, homodimer.

The protein resides in the cytoplasm. It catalyses the reaction XMP + diphosphate = xanthine + 5-phospho-alpha-D-ribose 1-diphosphate. It functions in the pathway purine metabolism; XMP biosynthesis via salvage pathway; XMP from xanthine: step 1/1. Converts the preformed base xanthine, a product of nucleic acid breakdown, to xanthosine 5'-monophosphate (XMP), so it can be reused for RNA or DNA synthesis. This is Xanthine phosphoribosyltransferase from Lactococcus lactis subsp. cremoris (strain MG1363).